The primary structure comprises 163 residues: ADP-ribosylation factor-like protein 2-binding protein (163 aa).

This sequence belongs to the ARL2BP family. In terms of assembly, interacts with GTP bound ARL2 and ARL3; the complex ARL2-ARL2BP as well as ARL2BP alone, binds to SLC25A4/ANT1. Interaction with ARL2 may be required for cilia basal body localization. Interacts with STAT3; interaction is enhanced with ARL2. Found in a complex with ARL2BP, ARL2 and SLC25A6. Found in a complex with ARL2, ARL2BP and SLC25A4. Interacts with STAT2, STAT3 and STAT4. In terms of tissue distribution, ubiquitous with higher expression in brain, especially in hippocampus and cortex. Also expressed in lung, cerebellum, liver, kidney, spleen and heart (at protein level).

The protein resides in the cytoplasm. Its subcellular location is the mitochondrion intermembrane space. It localises to the cytoskeleton. It is found in the microtubule organizing center. The protein localises to the centrosome. The protein resides in the nucleus. Its subcellular location is the spindle. It localises to the cilium basal body. Together with ARL2, plays a role in the nuclear translocation, retention and transcriptional activity of STAT3. May play a role as an effector of ARL2. This Rattus norvegicus (Rat) protein is ADP-ribosylation factor-like protein 2-binding protein (Arl2bp).